The chain runs to 131 residues: Sec-independent protein translocase protein TatB (131 aa).

The chain crosses the membrane as a helical span at residues 2 to 22 (FDGIGFMELLLIGVLGLVVLG). The disordered stretch occupies residues 69–131 (NQGLKNLAPE…ENAKSDKPNG (63 aa)). Over residues 105–123 (AKETPAKETATTETTSTEN) the composition is skewed to low complexity.

The protein belongs to the TatB family. The Tat system comprises two distinct complexes: a TatABC complex, containing multiple copies of TatA, TatB and TatC subunits, and a separate TatA complex, containing only TatA subunits. Substrates initially bind to the TatABC complex, which probably triggers association of the separate TatA complex to form the active translocon.

Its subcellular location is the cell inner membrane. Functionally, part of the twin-arginine translocation (Tat) system that transports large folded proteins containing a characteristic twin-arginine motif in their signal peptide across membranes. Together with TatC, TatB is part of a receptor directly interacting with Tat signal peptides. TatB may form an oligomeric binding site that transiently accommodates folded Tat precursor proteins before their translocation. This Shewanella piezotolerans (strain WP3 / JCM 13877) protein is Sec-independent protein translocase protein TatB.